A 467-amino-acid chain; its full sequence is Cysteine--tRNA ligase (467 aa).

Cysteine 28 contributes to the Zn(2+) binding site. The short motif at 30-40 is the 'HIGH' region element; sequence ITAYDYSHIGH. Zn(2+) contacts are provided by cysteine 211, histidine 236, and glutamate 240. The 'KMSKS' region signature appears at 268–272; that stretch reads KMSKS. Lysine 271 contacts ATP.

This sequence belongs to the class-I aminoacyl-tRNA synthetase family. Zn(2+) is required as a cofactor.

It localises to the cytoplasm. The enzyme catalyses tRNA(Cys) + L-cysteine + ATP = L-cysteinyl-tRNA(Cys) + AMP + diphosphate. The sequence is that of Cysteine--tRNA ligase (cysS) from Archaeoglobus fulgidus (strain ATCC 49558 / DSM 4304 / JCM 9628 / NBRC 100126 / VC-16).